The sequence spans 321 residues: Protein BIG GRAIN 1-like E (321 aa).

A disordered region spans residues 134–217 (AGSKKNKSKS…PPPYLNTPTK (84 aa)). The span at 135 to 147 (GSKKNKSKSKSKT) shows a compositional bias: basic residues. A compositionally biased stretch (low complexity) spans 172 to 206 (ISHFFSSSRSTSTTTTTTASSSSKSLISSSSSGFR).

This sequence belongs to the BIG GRAIN 1 (BG1) plant protein family.

The protein resides in the cell membrane. In terms of biological role, involved in auxin transport. Regulator of the auxin signaling pathway. The polypeptide is Protein BIG GRAIN 1-like E (Arabidopsis thaliana (Mouse-ear cress)).